The following is a 504-amino-acid chain: ATP synthase subunit alpha (504 aa).

An ATP-binding site is contributed by 169-176 (GDRKTGKT).

It belongs to the ATPase alpha/beta chains family. In terms of assembly, F-type ATPases have 2 components, CF(1) - the catalytic core - and CF(0) - the membrane proton channel. CF(1) has five subunits: alpha(3), beta(3), gamma(1), delta(1), epsilon(1). CF(0) has three main subunits: a(1), b(2) and c(9-12). The alpha and beta chains form an alternating ring which encloses part of the gamma chain. CF(1) is attached to CF(0) by a central stalk formed by the gamma and epsilon chains, while a peripheral stalk is formed by the delta and b chains.

Its subcellular location is the cell membrane. It carries out the reaction ATP + H2O + 4 H(+)(in) = ADP + phosphate + 5 H(+)(out). Produces ATP from ADP in the presence of a proton gradient across the membrane. The alpha chain is a regulatory subunit. This Leuconostoc citreum (strain KM20) protein is ATP synthase subunit alpha.